Reading from the N-terminus, the 314-residue chain is Methionyl-tRNA formyltransferase (314 aa).

Residue 110 to 113 (SLLP) coordinates (6S)-5,6,7,8-tetrahydrofolate.

Belongs to the Fmt family.

The catalysed reaction is L-methionyl-tRNA(fMet) + (6R)-10-formyltetrahydrofolate = N-formyl-L-methionyl-tRNA(fMet) + (6S)-5,6,7,8-tetrahydrofolate + H(+). Attaches a formyl group to the free amino group of methionyl-tRNA(fMet). The formyl group appears to play a dual role in the initiator identity of N-formylmethionyl-tRNA by promoting its recognition by IF2 and preventing the misappropriation of this tRNA by the elongation apparatus. The polypeptide is Methionyl-tRNA formyltransferase (Bacillus cytotoxicus (strain DSM 22905 / CIP 110041 / 391-98 / NVH 391-98)).